The sequence spans 440 residues: MSEFSQTVPELVAWARKNDFSISLPVDRLSFLLAVATLNGERLDGEMSEGELVDAFRHVSDAFEQTSETIGVRANNAINDMVRQRLLNRFTSEQAEGNAIYRLTPLGIGITDYYIRQREFSTLRLSMQLSIVAGELKRAADAAEEGGDEFHWHRNVYAPLKYSVAEIFDSIDLTQRLMDEQQQQVKDDIAQLLNKDWRAAISSCELLLSETSGTLRELQDTLEAAGDKLQANLLRIQDATMTHDDLHFVDRLVFDLQSKLDRIISWGQQSIDLWIGYDRHVHKFIRTAIDMDKNRVFAQRLRQSVQTYFDEPWALSYANADRLLDMRDEEMALRDEEVTGELPPDLEYEEFNEIREQLAAIIEEQLAVYKTRQVPLDLGLVVREYLSQYPRARHFDVARIVIDQAVRLGVAQADFTGLPAKWQPINDYGAKVQAHVIDKY.

Residues 208 to 236 are leucine-zipper; it reads LSETSGTLRELQDTLEAAGDKLQANLLRI.

It belongs to the MukF family. As to quaternary structure, interacts, and probably forms a ternary complex, with MukE and MukB via its C-terminal region. The complex formation is stimulated by calcium or magnesium. It is required for an interaction between MukE and MukB.

It is found in the cytoplasm. It localises to the nucleoid. Functionally, involved in chromosome condensation, segregation and cell cycle progression. May participate in facilitating chromosome segregation by condensation DNA from both sides of a centrally located replisome during cell division. Not required for mini-F plasmid partitioning. Probably acts via its interaction with MukB and MukE. Overexpression results in anucleate cells. It has a calcium binding activity. This is Chromosome partition protein MukF from Escherichia coli O157:H7.